The primary structure comprises 341 residues: L-threonine 3-dehydrogenase (341 aa).

Position 38 (C38) interacts with Zn(2+). Catalysis depends on charge relay system residues T40 and H43. Positions 63, 64, 93, 96, 99, and 107 each coordinate Zn(2+). Residues I175, D195, R200, 262–264 (LGI), and 286–287 (IY) each bind NAD(+).

The protein belongs to the zinc-containing alcohol dehydrogenase family. In terms of assembly, homotetramer. The cofactor is Zn(2+).

Its subcellular location is the cytoplasm. The enzyme catalyses L-threonine + NAD(+) = (2S)-2-amino-3-oxobutanoate + NADH + H(+). Its pathway is amino-acid degradation; L-threonine degradation via oxydo-reductase pathway; glycine from L-threonine: step 1/2. Its function is as follows. Catalyzes the NAD(+)-dependent oxidation of L-threonine to 2-amino-3-ketobutyrate. This chain is L-threonine 3-dehydrogenase, found in Shigella boydii serotype 4 (strain Sb227).